Here is a 159-residue protein sequence, read N- to C-terminus: Phosphopantetheine adenylyltransferase (159 aa).

Residue threonine 10 participates in substrate binding. ATP contacts are provided by residues 10 to 11 (TF) and histidine 18. Substrate contacts are provided by lysine 42, methionine 74, and arginine 88. ATP contacts are provided by residues 89 to 91 (GLR), glutamate 99, and 124 to 130 (WSFISSS).

Belongs to the bacterial CoaD family. As to quaternary structure, homohexamer. Mg(2+) serves as cofactor.

It is found in the cytoplasm. It catalyses the reaction (R)-4'-phosphopantetheine + ATP + H(+) = 3'-dephospho-CoA + diphosphate. Its pathway is cofactor biosynthesis; coenzyme A biosynthesis; CoA from (R)-pantothenate: step 4/5. Functionally, reversibly transfers an adenylyl group from ATP to 4'-phosphopantetheine, yielding dephospho-CoA (dPCoA) and pyrophosphate. The sequence is that of Phosphopantetheine adenylyltransferase from Yersinia pseudotuberculosis serotype O:3 (strain YPIII).